The primary structure comprises 388 residues: Xylose isomerase (388 aa).

Catalysis depends on residues His54 and Asp57. Mg(2+)-binding residues include Glu181, Glu217, His220, Asp245, Asp255, Asp257, and Asp287.

The protein belongs to the xylose isomerase family. Homotetramer. The cofactor is Mg(2+).

It is found in the cytoplasm. The catalysed reaction is alpha-D-xylose = alpha-D-xylulofuranose. This Streptomyces avermitilis (strain ATCC 31267 / DSM 46492 / JCM 5070 / NBRC 14893 / NCIMB 12804 / NRRL 8165 / MA-4680) protein is Xylose isomerase.